Consider the following 343-residue polypeptide: KRR1 small subunit processome component homolog (343 aa).

Positions 126–194 (DIIKIGNLVH…VRDIVLETMN (69 aa)) constitute a KH domain. Residues 230-246 (KNKNISKRKQPKNKKPK) are compositionally biased toward basic residues. The tract at residues 230-343 (KNKNISKRKQ…LMKANKKNRS (114 aa)) is disordered. Basic and acidic residues-rich tracts occupy residues 272-303 (LNKEQKQAKKQQERSVKQAEAAKKQDERRNKD) and 318-331 (RPAETSKVDVDALK). Residues 272 to 341 (LNKEQKQAKK…AKLMKANKKN (70 aa)) are a coiled coil. Over residues 333–343 (KLMKANKKNRS) the composition is skewed to basic residues.

This sequence belongs to the KRR1 family. In terms of assembly, monomer. Component of the ribosomal small subunit (SSU) processome.

It is found in the nucleus. The protein resides in the nucleolus. Required for 40S ribosome biogenesis. Involved in nucleolar processing of pre-18S ribosomal RNA and ribosome assembly. Binds to RNA. Required for female germline development, cell viability during eye development and for survival of dividing cells and epithelial cells during early wing disk development. The sequence is that of KRR1 small subunit processome component homolog from Drosophila virilis (Fruit fly).